Here is a 290-residue protein sequence, read N- to C-terminus: Picrinine-N-methytransferase TMT4 (290 aa).

The tract at residues 71–80 is SAM motif I; sequence MLDVGCGIGG. The Vacuolar targeting signal motif lies at 133–139; sequence DGTFDVV. Residues 134–142 are SAM motif II; sequence GTFDVVFTI. The segment at 161–170 is SAM motif III; it reads VAAPGAAIVI.

It belongs to the class I-like SAM-binding methyltransferase superfamily. gTMT family. Homodimer.

The protein resides in the vacuole membrane. It carries out the reaction picrinine + S-adenosyl-L-methionine = ervincine + S-adenosyl-L-homocysteine + H(+). It participates in alkaloid biosynthesis; vindoline biosynthesis. Functionally, S-adenosyl-L-methionine-dependent N-methyltransferase involved in the biosynthesis of biologically active monoterpenoid indole alkaloids (MIAs) natural products including vindoline. Catalyzes the conversion of picrinine to N-methylpicrinine (ervincine). The sequence is that of Picrinine-N-methytransferase TMT4 from Catharanthus roseus (Madagascar periwinkle).